Here is a 438-residue protein sequence, read N- to C-terminus: Elongation factor 1-alpha (438 aa).

The region spanning 6–229 is the tr-type G domain; that stretch reads KPHLNIVIIG…ALDTLEVPPK (224 aa). The tract at residues 15–22 is G1; sequence GHVDHGKS. 15 to 22 contributes to the GTP binding site; it reads GHVDHGKS. S22 serves as a coordination point for Mg(2+). The interval 71 to 75 is G2; the sequence is GVTIS. The tract at residues 92–95 is G3; that stretch reads DAPG. Residues 92 to 96 and 154 to 157 each bind GTP; these read DAPGH and NKMD. The tract at residues 154–157 is G4; sequence NKMD. Residues 195-197 form a G5 region; it reads SAW.

It belongs to the TRAFAC class translation factor GTPase superfamily. Classic translation factor GTPase family. EF-Tu/EF-1A subfamily.

Its subcellular location is the cytoplasm. The enzyme catalyses GTP + H2O = GDP + phosphate + H(+). Functionally, GTP hydrolase that promotes the GTP-dependent binding of aminoacyl-tRNA to the A-site of ribosomes during protein biosynthesis. This Desulfurococcus mucosus (Desulfurococcus mobilis) protein is Elongation factor 1-alpha.